Here is a 125-residue protein sequence, read N- to C-terminus: Large ribosomal subunit protein bL20 (125 aa).

It belongs to the bacterial ribosomal protein bL20 family.

Its function is as follows. Binds directly to 23S ribosomal RNA and is necessary for the in vitro assembly process of the 50S ribosomal subunit. It is not involved in the protein synthesizing functions of that subunit. In Thermobifida fusca (strain YX), this protein is Large ribosomal subunit protein bL20.